A 473-amino-acid chain; its full sequence is Glycine--tRNA ligase (473 aa).

Substrate is bound by residues Arg-101 and Glu-172. ATP-binding positions include 204–206 (RNE), 214–219 (FRTREF), 289–290 (EL), and 333–336 (GVER). 219 to 223 (FEQME) is a binding site for substrate. Position 329-333 (329-333 (EPSVG)) interacts with substrate.

This sequence belongs to the class-II aminoacyl-tRNA synthetase family. As to quaternary structure, homodimer.

The protein localises to the cytoplasm. It carries out the reaction tRNA(Gly) + glycine + ATP = glycyl-tRNA(Gly) + AMP + diphosphate. Its function is as follows. Catalyzes the attachment of glycine to tRNA(Gly). In Ureaplasma parvum serovar 3 (strain ATCC 27815 / 27 / NCTC 11736), this protein is Glycine--tRNA ligase.